A 252-amino-acid polypeptide reads, in one-letter code: Phosphate import ATP-binding protein PstB 1 (252 aa).

One can recognise an ABC transporter domain in the interval 6–247; the sequence is ISSKDLHLYY…PKEKQTEDYI (242 aa). 38 to 45 is an ATP binding site; the sequence is GPSGCGKS.

It belongs to the ABC transporter superfamily. Phosphate importer (TC 3.A.1.7) family. In terms of assembly, the complex is composed of two ATP-binding proteins (PstB), two transmembrane proteins (PstC and PstA) and a solute-binding protein (PstS).

It is found in the cell membrane. It carries out the reaction phosphate(out) + ATP + H2O = ADP + 2 phosphate(in) + H(+). Functionally, part of the ABC transporter complex PstSACB involved in phosphate import. Responsible for energy coupling to the transport system. In Enterococcus faecalis (strain ATCC 700802 / V583), this protein is Phosphate import ATP-binding protein PstB 1.